A 339-amino-acid chain; its full sequence is Dihydroorotate dehydrogenase (quinone) (339 aa).

FMN contacts are provided by residues 62–66 and T86; that span reads AGMDK. K66 serves as a coordination point for substrate. 111–115 lines the substrate pocket; that stretch reads NRMGF. 2 residues coordinate FMN: N139 and N172. Position 172 (N172) interacts with substrate. S175 functions as the Nucleophile in the catalytic mechanism. Position 177 (N177) interacts with substrate. K217 and T245 together coordinate FMN. 246–247 contacts substrate; that stretch reads NT. FMN-binding positions include G268, G297, and 318-319; that span reads YS.

The protein belongs to the dihydroorotate dehydrogenase family. Type 2 subfamily. As to quaternary structure, monomer. Requires FMN as cofactor.

Its subcellular location is the cell membrane. It carries out the reaction (S)-dihydroorotate + a quinone = orotate + a quinol. Its pathway is pyrimidine metabolism; UMP biosynthesis via de novo pathway; orotate from (S)-dihydroorotate (quinone route): step 1/1. Its function is as follows. Catalyzes the conversion of dihydroorotate to orotate with quinone as electron acceptor. The chain is Dihydroorotate dehydrogenase (quinone) from Shewanella baltica (strain OS185).